Here is a 319-residue protein sequence, read N- to C-terminus: Lipoyl synthase (319 aa).

Positions 1–29 (MVVVVDTVSDKPIRPRHPEKAARPDALSP) are disordered. Residues 8-29 (VSDKPIRPRHPEKAARPDALSP) are compositionally biased toward basic and acidic residues. Positions 61, 66, 72, 87, 91, 94, and 300 each coordinate [4Fe-4S] cluster. The Radical SAM core domain occupies 73 to 289 (WDRKHATFMI…ESLAYAKGFL (217 aa)).

The protein belongs to the radical SAM superfamily. Lipoyl synthase family. It depends on [4Fe-4S] cluster as a cofactor.

It localises to the cytoplasm. It carries out the reaction [[Fe-S] cluster scaffold protein carrying a second [4Fe-4S](2+) cluster] + N(6)-octanoyl-L-lysyl-[protein] + 2 oxidized [2Fe-2S]-[ferredoxin] + 2 S-adenosyl-L-methionine + 4 H(+) = [[Fe-S] cluster scaffold protein] + N(6)-[(R)-dihydrolipoyl]-L-lysyl-[protein] + 4 Fe(3+) + 2 hydrogen sulfide + 2 5'-deoxyadenosine + 2 L-methionine + 2 reduced [2Fe-2S]-[ferredoxin]. It functions in the pathway protein modification; protein lipoylation via endogenous pathway; protein N(6)-(lipoyl)lysine from octanoyl-[acyl-carrier-protein]: step 2/2. Its function is as follows. Catalyzes the radical-mediated insertion of two sulfur atoms into the C-6 and C-8 positions of the octanoyl moiety bound to the lipoyl domains of lipoate-dependent enzymes, thereby converting the octanoylated domains into lipoylated derivatives. The protein is Lipoyl synthase of Rhodopseudomonas palustris (strain BisA53).